A 190-amino-acid chain; its full sequence is Cancer-related nucleoside-triphosphatase homolog (190 aa).

Alanine 2 is modified (N-acetylalanine). ATP is bound by residues 9-16 and 109-116; these read GPPGVGKT and ICVIDEVG. At lysine 165 the chain carries N6-acetyllysine.

This sequence belongs to the THEP1 NTPase family. As to quaternary structure, monomer.

It carries out the reaction a ribonucleoside 5'-triphosphate + H2O = a ribonucleoside 5'-diphosphate + phosphate + H(+). The enzyme catalyses 5-methyl-UTP + H2O = 5-methyl-UDP + phosphate + H(+). It catalyses the reaction CTP + H2O = CDP + phosphate + H(+). The catalysed reaction is ATP + H2O = ADP + phosphate + H(+). It carries out the reaction GTP + H2O = GDP + phosphate + H(+). In terms of biological role, has nucleotide phosphatase activity towards ATP, GTP, CTP, TTP and UTP. Hydrolyzes nucleoside diphosphates with lower efficiency. The polypeptide is Cancer-related nucleoside-triphosphatase homolog (NTPCR) (Bos taurus (Bovine)).